The chain runs to 138 residues: Putative pre-16S rRNA nuclease (138 aa).

It belongs to the YqgF nuclease family.

The protein resides in the cytoplasm. In terms of biological role, could be a nuclease involved in processing of the 5'-end of pre-16S rRNA. The polypeptide is Putative pre-16S rRNA nuclease (Geobacillus thermodenitrificans (strain NG80-2)).